The chain runs to 429 residues: UDP-N-acetylglucosamine 1-carboxyvinyltransferase (429 aa).

A phosphoenolpyruvate-binding site is contributed by 22–23 (KN). UDP-N-acetyl-alpha-D-glucosamine is bound at residue Arg-102. Cys-126 (proton donor) is an active-site residue. Cys-126 carries the 2-(S-cysteinyl)pyruvic acid O-phosphothioketal modification. UDP-N-acetyl-alpha-D-glucosamine-binding positions include 131-135 (RPVDL), Asp-316, and Ile-338.

This sequence belongs to the EPSP synthase family. MurA subfamily.

It localises to the cytoplasm. It carries out the reaction phosphoenolpyruvate + UDP-N-acetyl-alpha-D-glucosamine = UDP-N-acetyl-3-O-(1-carboxyvinyl)-alpha-D-glucosamine + phosphate. It participates in cell wall biogenesis; peptidoglycan biosynthesis. Cell wall formation. Adds enolpyruvyl to UDP-N-acetylglucosamine. This Rhodopseudomonas palustris (strain BisB18) protein is UDP-N-acetylglucosamine 1-carboxyvinyltransferase.